A 212-amino-acid chain; its full sequence is KxDL motif-containing protein CG10681 (212 aa).

Positions 128–159 (RSSLAEEAEDDTEAQAKKTAETPAPAAAKPVL) are disordered. The span at 148–157 (ETPAPAAAKP) shows a compositional bias: low complexity.

It belongs to the KXD1 family.

This Drosophila melanogaster (Fruit fly) protein is KxDL motif-containing protein CG10681.